We begin with the raw amino-acid sequence, 252 residues long: Carboxy-S-adenosyl-L-methionine synthase (252 aa).

S-adenosyl-L-methionine is bound by residues tyrosine 45, 70-72 (GCS), 95-96 (DN), 127-128 (DI), asparagine 142, and arginine 209.

Belongs to the class I-like SAM-binding methyltransferase superfamily. Cx-SAM synthase family. As to quaternary structure, homodimer.

It carries out the reaction prephenate + S-adenosyl-L-methionine = carboxy-S-adenosyl-L-methionine + 3-phenylpyruvate + H2O. Catalyzes the conversion of S-adenosyl-L-methionine (SAM) to carboxy-S-adenosyl-L-methionine (Cx-SAM). The chain is Carboxy-S-adenosyl-L-methionine synthase from Pseudomonas paraeruginosa (strain DSM 24068 / PA7) (Pseudomonas aeruginosa (strain PA7)).